Reading from the N-terminus, the 301-residue chain is 2-dehydropantoate 2-reductase (301 aa).

NADP(+) is bound by residues 7–12 (GAGAIG), lysine 74, asparagine 99, and alanine 123. Lysine 179 acts as the Proton donor in catalysis. Residues lysine 179, asparagine 183, asparagine 187, asparagine 197, and 246 to 249 (NYNS) contribute to the substrate site. Glutamate 261 provides a ligand contact to NADP(+).

It belongs to the ketopantoate reductase family.

It localises to the cytoplasm. The enzyme catalyses (R)-pantoate + NAD(+) = 2-dehydropantoate + NADH + H(+). It carries out the reaction (R)-pantoate + NADP(+) = 2-dehydropantoate + NADPH + H(+). Its pathway is cofactor biosynthesis; coenzyme A biosynthesis. Its function is as follows. Catalyzes the NAD(P)H-dependent reduction of ketopantoate into pantoic acid. The polypeptide is 2-dehydropantoate 2-reductase (Pyrococcus horikoshii (strain ATCC 700860 / DSM 12428 / JCM 9974 / NBRC 100139 / OT-3)).